Reading from the N-terminus, the 203-residue chain is MPPRRGIEVRQAVGDGAAPRWRMSLLENTFSSFLQSIGGGVAADGAAARAVFGEGSLFSPFLFGKFFDPADAFPLWEFEPEVLLAALRRGARTTVDWAETDSEYYLRADIPGGRKCDVEVSGDDAMRVVDVSGLWRAAPPPPPPDGRDWRAGRWWEHGFVRRVELPEDADWRKVEAFFDDGEGLLEIKVPKSGDAHQAAAATA.

Positions 86 to 203 (ALRRGARTTV…DAHQAAAATA (118 aa)) constitute a sHSP domain.

It belongs to the small heat shock protein (HSP20) family. May form oligomeric structures.

The protein localises to the cytoplasm. This is 22.3 kDa class VI heat shock protein (HSP22.3) from Oryza sativa subsp. japonica (Rice).